The primary structure comprises 316 residues: MAKERHSVGVIGAPFSKGQPRRGVEEGPKYLREAGLIEKLREFGNDVRDCGDLDFPDVPNDTPFNNVKNPRTVGKATEILANAVTAVKKADKTCQSIGGDHSLAVGTIAGHAAVHPNLCVVWVDAHADINTPSTSPCGNLHGQPLSFLMKELKAKMPAVPGFEWVKPCLRSKDIVYIGLRDVDPGEHYILKTLGIKYLSMIEVDYLKDDKVMEETLEYLVGKHKRPIHLSFDIDGLDPSIAPATGTPCPGGRTYREGRILHEQLHKTGLLSGVDTIWMESTSRGETKRDVEVTVKTALDMTLSCFGKAREGFHAST.

The tract at residues 1 to 26 (MAKERHSVGVIGAPFSKGQPRRGVEE) is disordered. Positions 101, 124, 126, and 128 each coordinate Mn(2+). Residues 126–130 (HADIN), 137–139 (CGN), and D183 contribute to the substrate site. Mn(2+)-binding residues include D232 and D234. T246 provides a ligand contact to substrate.

The protein belongs to the arginase family. In terms of assembly, homotrimer. Requires Mn(2+) as cofactor. In terms of tissue distribution, strongest expression in liver.

It carries out the reaction L-arginine + H2O = urea + L-ornithine. It participates in nitrogen metabolism; urea cycle; L-ornithine and urea from L-arginine: step 1/1. In Xenopus laevis (African clawed frog), this protein is Arginase-1 (arg1).